The primary structure comprises 661 residues: Phospholipid:diacylglycerol acyltransferase (661 aa).

The interval 1–71 (MGTLFRRNVQ…FDRKRDGNGR (71 aa)) is disordered. Over 1–80 (MGTLFRRNVQ…RKRWRDSRRL (80 aa)) the chain is Cytoplasmic. A compositionally biased stretch (basic residues) spans 34–48 (HIHHQQGLGHKRRRG). 2 consecutive short sequence motifs (bipartite nuclear localization signal) follow at residues 43 to 50 (HKRRRGIS) and 64 to 71 (RKRDGNGR). The span at 54-70 (KRNERGKDFDRKRDGNG) shows a compositional bias: basic and acidic residues. Residues 81–101 (IFILGAFLGVLLPFSFGAYHV) form a helical membrane-spanning segment. At 102–661 (HNSDSDLFDN…QWVSQMPFPM (560 aa)) the chain is on the lumenal side. Glutamine 162 is a substrate binding site. The GHSXG lipase motif signature appears at 322–326 (GHSMG). Serine 324 serves as the catalytic Acyl-ester intermediate. Substrate is bound at residue methionine 325. 3 N-linked (GlcNAc...) asparagine glycosylation sites follow: asparagine 453, asparagine 461, and asparagine 469. Aspartate 567 serves as the catalytic Charge relay system. Asparagine 594 carries N-linked (GlcNAc...) asparagine glycosylation. Histidine 618 acts as the Charge relay system in catalysis.

It belongs to the AB hydrolase superfamily. Lipase family.

The protein resides in the endoplasmic reticulum membrane. It is found in the nucleus inner membrane. It carries out the reaction a glycerophospholipid + a 1,2-diacyl-sn-glycerol = a monoacylglycerophospholipid + a triacyl-sn-glycerol. The catalysed reaction is a 1-acyl-sn-glycerol + a 1,2-diacyl-sn-glycero-3-phosphocholine = a 1-acyl-sn-glycero-3-phosphocholine + a 1,2-diacyl-sn-glycerol. The enzyme catalyses 1,2-di-(9Z-octadecenoyl)-sn-glycero-3-phosphoethanolamine + 1,2-di-(9Z-octadecenoyl)-sn-glycerol = 1-(9Z-octadecenoyl)-sn-glycero-3-phosphoethanolamine + 1,2,3-tri-(9Z-octadecenoyl)-glycerol. It catalyses the reaction 1,2-di-(9Z-octadecenoyl)-sn-glycerol + 1,2-di-(9Z-octadecenoyl)-sn-glycero-3-phosphocholine = 1,2,3-tri-(9Z-octadecenoyl)-glycerol + 1-(9Z-octadecenoyl)-sn-glycero-3-phosphocholine. It carries out the reaction 1-(9Z-octadecenoyl)-sn-glycerol + 1,2-di-(9Z-octadecenoyl)-sn-glycero-3-phosphocholine = di-(9Z)-octadecenoylglycerol + 1-(9Z-octadecenoyl)-sn-glycero-3-phosphocholine. The catalysed reaction is 2-(9Z-octadecenoyl)-glycerol + 1,2-di-(9Z-octadecenoyl)-sn-glycero-3-phosphocholine = 1,2-di-(9Z-octadecenoyl)-glycerol + 1-(9Z-octadecenoyl)-sn-glycero-3-phosphocholine. The enzyme catalyses 1-(9Z-octadecenoyl)-2-hexadecanoyl-sn-glycero-3-phosphoethanolamine + 1,2-di-(9Z-octadecenoyl)-sn-glycerol = 1,2-di-(9Z)-octadecenoyl-3-hexadecanoyl-sn-glycerol + 1-(9Z-octadecenoyl)-sn-glycero-3-phosphoethanolamine. It catalyses the reaction 1-(9Z-octadecenoyl)-2-octadecanoyl-sn-glycero-3-phosphoethanolamine + 1,2-di-(9Z-octadecenoyl)-sn-glycerol = 1,2-di-(9Z)-octadecenoyl-3-octadecanoyl-sn-glycerol + 1-(9Z-octadecenoyl)-sn-glycero-3-phosphoethanolamine. It carries out the reaction 1-(9Z)-octadecenoyl-2-(9Z,12Z)-octadecadienoyl-sn-glycero-3-phosphoethanolamine + 1,2-di-(9Z-octadecenoyl)-sn-glycerol = 1,2-di-(9Z)-octadecenoyl-3-(9Z,12Z)-octadecadienoyl-sn-glycerol + 1-(9Z-octadecenoyl)-sn-glycero-3-phosphoethanolamine. Functionally, catalyzes triacylglycerol (TAG) formation by an acyl-CoA independent pathway. The enzyme specifically transfers acyl groups from the sn-2 position of a phospholipid to diacylglycerol (DAG), thus forming an sn-1-lysophospholipid. The preferred acyl donors are phosphatidylethanolamine (PE) and phosphatidylcholine (PC). Also capable of using broad acyl donors such as phosphatidic acid (PA), phosphatidylserine (PS), phosphatidylglycerol (PG) and phosphatidylinositol (PI), as well as monogalactosyldiacylglycerol (MGDG), digalactosyldiacylglycerol (DGDG), and acyl-CoA, and it is more likely to use unsaturated acyl donors. As acyl acceptors, it prefers 1,2- over 1,3-diacylglycerol (DAG). Additionally, has esterification activity that can utilize methanol as acyl acceptor to generate fatty acid methyl esters (FAME). Can also utilize ceramide instead of DAG, acylating the ceramides by attaching a fatty acid to the hydroxy group on the first carbon atom of the long-chain base to produce 1-O-acylceramides. Involved in lipid particle synthesis from the endoplasmic reticulum, promoting localized TAG production at discrete ER subdomains. Relocates from the endoplasmic reticulum to a subdomain of the inner nuclear membrane upon nutrient starvation, where it provides a site of TAG synthesis, which is coupled with nuclear membrane remodeling. The chain is Phospholipid:diacylglycerol acyltransferase from Saccharomyces cerevisiae (strain ATCC 204508 / S288c) (Baker's yeast).